We begin with the raw amino-acid sequence, 146 residues long: Large ribosomal subunit protein uL15 (146 aa).

Over residues 1-13 (MKLHELKPAEGSR) the composition is skewed to basic and acidic residues. Positions 1–57 (MKLHELKPAEGSRKVRNRVGRGTSSGNGKTSGRGQKGQKARSGVGLRPGFEGGQTPL) are disordered. Over residues 23 to 35 (TSSGNGKTSGRGQ) the composition is skewed to gly residues.

It belongs to the universal ribosomal protein uL15 family. Part of the 50S ribosomal subunit.

In terms of biological role, binds to the 23S rRNA. This chain is Large ribosomal subunit protein uL15, found in Streptococcus thermophilus (strain ATCC BAA-491 / LMD-9).